A 218-amino-acid chain; its full sequence is Outer-membrane lipoprotein LolB (218 aa).

Residues 1 to 20 (MSQVIRTLALTGLALAGLSG) form the signal peptide. The N-palmitoyl cysteine moiety is linked to residue Cys21. Cys21 carries S-diacylglycerol cysteine lipidation.

It belongs to the LolB family. As to quaternary structure, monomer.

The protein resides in the cell outer membrane. Plays a critical role in the incorporation of lipoproteins in the outer membrane after they are released by the LolA protein. This chain is Outer-membrane lipoprotein LolB, found in Xanthomonas campestris pv. campestris (strain B100).